The following is a 228-amino-acid chain: Aquaporin Z (228 aa).

2 consecutive transmembrane segments (helical) span residues 1–21 and 23–43; these read MLNK…GGCG and AILA…ALAF. Positions 63 to 65 match the NPA 1 motif; it reads NPA. The next 3 membrane-spanning stretches (helical) occupy residues 82–102, 129–149, and 154–174; these read IPYW…LYVI, MMAG…IILG, and LAPA…IHLV. An NPA 2 motif is present at residues 184–186; that stretch reads NPA. Residues 205–225 traverse the membrane as a helical segment; that stretch reads LFWVAPLVGAVIGAIIWKGLL.

It belongs to the MIP/aquaporin (TC 1.A.8) family. In terms of assembly, homotetramer.

It is found in the cell inner membrane. It carries out the reaction H2O(in) = H2O(out). Channel that permits osmotically driven movement of water in both directions. It is involved in the osmoregulation and in the maintenance of cell turgor during volume expansion in rapidly growing cells. It mediates rapid entry or exit of water in response to abrupt changes in osmolarity. This chain is Aquaporin Z, found in Brucella melitensis biotype 1 (strain ATCC 23456 / CCUG 17765 / NCTC 10094 / 16M).